A 213-amino-acid chain; its full sequence is Adenylate kinase (213 aa).

An ATP-binding site is contributed by 10–15; that stretch reads GAGKGT. The tract at residues 30–59 is NMP; the sequence is AVGDIFRTIIKTSTSEAELINNYVKQGALI. AMP is bound by residues Arg36, 57-59, 85-88, and Gln92; these read ALI and GYPR. Positions 123–161 are LID; sequence GRYSCKNCGKIYNVHFLQPKTDYVCDVCSSNVFDYRRDD. ATP is bound at residue Arg124. The Zn(2+) site is built by Cys127 and Cys130. An ATP-binding site is contributed by 133–134; that stretch reads IY. Zn(2+) contacts are provided by Cys147 and Cys150. Residues Arg158 and Arg169 each coordinate AMP. Lys197 contributes to the ATP binding site.

The protein belongs to the adenylate kinase family. As to quaternary structure, monomer.

The protein localises to the cytoplasm. The catalysed reaction is AMP + ATP = 2 ADP. It functions in the pathway purine metabolism; AMP biosynthesis via salvage pathway; AMP from ADP: step 1/1. Catalyzes the reversible transfer of the terminal phosphate group between ATP and AMP. Plays an important role in cellular energy homeostasis and in adenine nucleotide metabolism. The sequence is that of Adenylate kinase from Rickettsia typhi (strain ATCC VR-144 / Wilmington).